We begin with the raw amino-acid sequence, 39 residues long: Photosystem II reaction center protein J (39 aa).

A helical transmembrane segment spans residues 9–29 (LWIIATFGGIAALTVVGLFIY).

Belongs to the PsbJ family. In terms of assembly, PSII is composed of 1 copy each of membrane proteins PsbA, PsbB, PsbC, PsbD, PsbE, PsbF, PsbH, PsbI, PsbJ, PsbK, PsbL, PsbM, PsbT, PsbX, PsbY, PsbZ, Psb30/Ycf12, at least 3 peripheral proteins of the oxygen-evolving complex and a large number of cofactors. It forms dimeric complexes.

The protein localises to the plastid. It localises to the chloroplast thylakoid membrane. Functionally, one of the components of the core complex of photosystem II (PSII). PSII is a light-driven water:plastoquinone oxidoreductase that uses light energy to abstract electrons from H(2)O, generating O(2) and a proton gradient subsequently used for ATP formation. It consists of a core antenna complex that captures photons, and an electron transfer chain that converts photonic excitation into a charge separation. The sequence is that of Photosystem II reaction center protein J from Guillardia theta (Cryptophyte).